A 195-amino-acid chain; its full sequence is FMN-dependent NADH:quinone oxidoreductase (195 aa).

FMN is bound by residues Ser-10, Ser-16 to Ser-18, and Met-91 to Phe-94.

This sequence belongs to the azoreductase type 1 family. In terms of assembly, homodimer. FMN serves as cofactor.

The catalysed reaction is 2 a quinone + NADH + H(+) = 2 a 1,4-benzosemiquinone + NAD(+). It catalyses the reaction N,N-dimethyl-1,4-phenylenediamine + anthranilate + 2 NAD(+) = 2-(4-dimethylaminophenyl)diazenylbenzoate + 2 NADH + 2 H(+). Quinone reductase that provides resistance to thiol-specific stress caused by electrophilic quinones. Its function is as follows. Also exhibits azoreductase activity. Catalyzes the reductive cleavage of the azo bond in aromatic azo compounds to the corresponding amines. The polypeptide is FMN-dependent NADH:quinone oxidoreductase (Aeromonas salmonicida (strain A449)).